The sequence spans 330 residues: Polyprenyl transferase ausN (330 aa).

Helical transmembrane passes span 116-136, 165-185, 189-209, 238-258, and 260-280; these read AATIFTACLFVLGCSLLLFLP, LILINIAWAIPMAMHSLGMEP, ILSMLCMCVFFSAVIVMIDLV, AYSLFAISSLALLFGGVLGGL, and VPFVLFSVGGHIVGFWRFLRA.

It belongs to the UbiA prenyltransferase family. It depends on Mg(2+) as a cofactor.

Its subcellular location is the membrane. The catalysed reaction is 3,5-dimethylorsellinate + (2E,6E)-farnesyl diphosphate = (3R)-3-farnesyl-6-hydroxy-2,3,5-trimethyl-4-oxocyclohexa-1,5-diene-1-carboxylate + diphosphate + H(+). Its pathway is secondary metabolite biosynthesis; terpenoid biosynthesis. Its function is as follows. Polyprenyl transferase; part of the gene cluster B that mediates the biosynthesis of austinol and dehydroaustinol, two fungal meroterpenoids. The first step of the pathway is the synthesis of 3,5-dimethylorsellinic acid by the polyketide synthase ausA. 3,5-dimethylorsellinic acid is then prenylated by the polyprenyl transferase ausN. Further epoxidation by the FAD-dependent monooxygenase ausM and cyclization by the probable terpene cyclase ausL lead to the formation of protoaustinoid A. Protoaustinoid A is then oxidized to spiro-lactone preaustinoid A3 by the combined action of the FAD-binding monooxygenases ausB and ausC, and the dioxygenase ausE. Acid-catalyzed keto-rearrangement and ring contraction of the tetraketide portion of preaustinoid A3 by ausJ lead to the formation of preaustinoid A4. The aldo-keto reductase ausK, with the help of ausH, is involved in the next step by transforming preaustinoid A4 into isoaustinone which is in turn hydroxylated by the P450 monooxygenase ausI to form austinolide. Finally, the cytochrome P450 monooxygenase ausG modifies austinolide to austinol. Austinol can be further modified to dehydroaustinol which forms a diffusible complex with diorcinol that initiates conidiation. Due to genetic rearrangements of the clusters and the subsequent loss of some enzymes, the end products of the Emericella nidulans austinoid biosynthesis clusters are austinol and dehydroaustinol, even if additional enzymes, such as the O-acetyltransferase ausQ and the cytochrome P450 monooxygenase ausR are still functional. This chain is Polyprenyl transferase ausN, found in Emericella nidulans (strain FGSC A4 / ATCC 38163 / CBS 112.46 / NRRL 194 / M139) (Aspergillus nidulans).